The following is a 397-amino-acid chain: Teichoic acid D-alanine hydrolase (397 aa).

The signal sequence occupies residues methionine 1–alanine 23.

It localises to the cell membrane. It carries out the reaction [(4-D-Ala)-(2-GlcNAc)-Rib-ol-P]n-[Gro-P]m-beta-D-ManNAc-(1-&gt;4)-alpha-D-GlcNAc-P-peptidoglycan + n H2O = [(2-GlcNAc)-Rib-ol-P]n-[Gro-P]m-beta-D-ManNAc-(1-&gt;4)-alpha-D-GlcNAc-P-peptidoglycan + n D-alanine.. In terms of biological role, catalyzes the liberation of D-alanyl moieties present on wall teichoic acid (WTA) and lipoteichoic acid (LTA). Affects the methicillin resistance level and autolysis in the presence of Triton X-100 as well as the cell wall structure. This is Teichoic acid D-alanine hydrolase (fmtA) from Staphylococcus aureus (strain NCTC 8325 / PS 47).